The chain runs to 159 residues: 2-C-methyl-D-erythritol 2,4-cyclodiphosphate synthase (159 aa).

2 residues coordinate a divalent metal cation: Asp8 and His10. 4-CDP-2-C-methyl-D-erythritol 2-phosphate-binding positions include 8-10 and 34-35; these read DVH and HS. Position 42 (His42) interacts with a divalent metal cation. 4-CDP-2-C-methyl-D-erythritol 2-phosphate-binding positions include 56–58, 61–65, 100–106, 132–135, Phe139, and Arg142; these read DIG, FPDTD, AQAPKML, and TTTE.

This sequence belongs to the IspF family. In terms of assembly, homotrimer. A divalent metal cation serves as cofactor.

It carries out the reaction 4-CDP-2-C-methyl-D-erythritol 2-phosphate = 2-C-methyl-D-erythritol 2,4-cyclic diphosphate + CMP. The protein operates within isoprenoid biosynthesis; isopentenyl diphosphate biosynthesis via DXP pathway; isopentenyl diphosphate from 1-deoxy-D-xylulose 5-phosphate: step 4/6. In terms of biological role, involved in the biosynthesis of isopentenyl diphosphate (IPP) and dimethylallyl diphosphate (DMAPP), two major building blocks of isoprenoid compounds. Catalyzes the conversion of 4-diphosphocytidyl-2-C-methyl-D-erythritol 2-phosphate (CDP-ME2P) to 2-C-methyl-D-erythritol 2,4-cyclodiphosphate (ME-CPP) with a corresponding release of cytidine 5-monophosphate (CMP). In Salmonella choleraesuis (strain SC-B67), this protein is 2-C-methyl-D-erythritol 2,4-cyclodiphosphate synthase.